The chain runs to 776 residues: Serine/threonine-protein kinase SIK1 (776 aa).

Residues 27–278 enclose the Protein kinase domain; it reads YDVERTLGKG…IAQIRQHRWM (252 aa). ATP-binding positions include 33–41 and K56; that span reads LGKGNFAVV. D149 (proton acceptor) is an active-site residue. The residue at position 182 (T182) is a Phosphothreonine; by LKB1 and GSK3-beta. At S186 the chain carries Phosphoserine; by autocatalysis. A UBA domain is found at 303 to 343; that stretch reads DYNEQVLGIMQALGIDRQRTVESLQNSSYNHFAAIYYLLLE. Phosphothreonine; by CaMK1 is present on T322. Disordered regions lie at residues 350 to 371 and 449 to 472; these read STQPSSRATPAPARQPQLRNSD and EARQGPSLEEEQEVQEPLPGSTGR. At S577 the chain carries Phosphoserine; by PKA. The RK-rich region stretch occupies residues 586–612; the sequence is KAFRQQLRKNARTKGFLGLNKIKGLAR. The tract at residues 621-643 is disordered; the sequence is GSRGGMSTFHTPAPSSGLQGCTA. Positions 628–643 are enriched in polar residues; sequence TFHTPAPSSGLQGCTA.

The protein belongs to the protein kinase superfamily. CAMK Ser/Thr protein kinase family. AMPK subfamily. As to quaternary structure, interacts (when phosphorylated on Thr-182 and Ser-186) with YWHAZ. Interacts with ATP1A1. The cofactor is Mg(2+). Post-translationally, phosphorylated at Thr-182 by STK11/LKB1 in complex with STE20-related adapter-alpha (STRADA) pseudo kinase and CAB39, leading to its activation. Phosphorylation at Thr-182 promotes autophosphorylation at Ser-186, which is required for sustained activity. Autophosphorylation at Ser-186 is maintained by sequential phosphorylation at Thr-182 by GSK3-beta. GSK3-beta cannot initiate phosphorylation at Thr-182, it can only maintain it. Phosphorylation at Ser-577 by PKA promotes translocation to the cytoplasm. Phosphorylation at Thr-322 by CaMK1 following intracellular sodium concentration leads to activation.

Its subcellular location is the cytoplasm. It localises to the nucleus. The catalysed reaction is L-seryl-[protein] + ATP = O-phospho-L-seryl-[protein] + ADP + H(+). It catalyses the reaction L-threonyl-[protein] + ATP = O-phospho-L-threonyl-[protein] + ADP + H(+). Activated by phosphorylation on Thr-182. Also activated by phosphorylation on Thr-322 in response to increases in intracellular sodium in parallel with elevations in intracellular calcium through the reversible sodium/calcium exchanger. Serine/threonine-protein kinase involved in various processes such as cell cycle regulation, gluconeogenesis and lipogenesis regulation, muscle growth and differentiation and tumor suppression. Phosphorylates HDAC4, HDAC5, PPME1, SREBF1, CRTC1/TORC1 and CRTC2/TORC2. Acts as a tumor suppressor and plays a key role in p53/TP53-dependent anoikis, a type of apoptosis triggered by cell detachment: required for phosphorylation of p53/TP53 in response to loss of adhesion and is able to suppress metastasis. Part of a sodium-sensing signaling network, probably by mediating phosphorylation of PPME1: following increases in intracellular sodium, SIK1 is activated by CaMK1 and phosphorylates PPME1 subunit of protein phosphatase 2A (PP2A), leading to dephosphorylation of sodium/potassium-transporting ATPase ATP1A1 and subsequent increase activity of ATP1A1. Acts as a regulator of muscle cells by phosphorylating and inhibiting class II histone deacetylases HDAC4 and HDAC5, leading to promote expression of MEF2 target genes in myocytes. Also required during cardiomyogenesis by regulating the exit of cardiomyoblasts from the cell cycle via down-regulation of CDKN1C/p57Kip2. Acts as a regulator of hepatic gluconeogenesis by phosphorylating and repressing the CREB-specific coactivators CRTC1/TORC1 and CRTC2/TORC2, leading to inhibit CREB activity. Also regulates hepatic lipogenesis by phosphorylating and inhibiting SREBF1. In concert with CRTC1/TORC1, regulates the light-induced entrainment of the circadian clock by attenuating PER1 induction; represses CREB-mediated transcription of PER1 by phosphorylating and deactivating CRTC1/TORC1. This is Serine/threonine-protein kinase SIK1 (Sik1) from Rattus norvegicus (Rat).